We begin with the raw amino-acid sequence, 100 residues long: Urease subunit gamma (100 aa).

This sequence belongs to the urease gamma subunit family. As to quaternary structure, heterotrimer of UreA (gamma), UreB (beta) and UreC (alpha) subunits. Three heterotrimers associate to form the active enzyme.

It localises to the cytoplasm. The catalysed reaction is urea + 2 H2O + H(+) = hydrogencarbonate + 2 NH4(+). Its pathway is nitrogen metabolism; urea degradation; CO(2) and NH(3) from urea (urease route): step 1/1. This chain is Urease subunit gamma, found in Nitrosospira multiformis (strain ATCC 25196 / NCIMB 11849 / C 71).